A 1054-amino-acid polypeptide reads, in one-letter code: Filament-like plant protein 6 (1054 aa).

Coiled coils occupy residues 64-139 (VQIK…VKQH), 174-200 (AEDR…KDHE), and 250-341 (SNML…RKKL). Disordered stretches follow at residues 359–390 (RDSG…GSEF) and 448–506 (EAQL…KEKD). Low complexity-rich tracts occupy residues 371-380 (VKVSSPCKSP), 450-461 (QLQQNNSQKSSL), and 470-494 (SNPS…GSLS). Residues 389-463 (EFSLDNAQKF…NNSQKSSLEV (75 aa)) are a coiled coil. Coiled-coil stretches lie at residues 637–666 (QNLV…RIHD) and 788–944 (ESDS…IFVL). A disordered region spans residues 951–1054 (FRPQPEQMRS…SRFFSSKSGY (104 aa)). Low complexity predominate over residues 1007–1032 (PSDSETSDTTTSPSRVGSRLSRSGSS).

The protein belongs to the FPP family. In terms of assembly, interacts with WPP/MAF proteins.

This chain is Filament-like plant protein 6 (FPP6), found in Arabidopsis thaliana (Mouse-ear cress).